We begin with the raw amino-acid sequence, 456 residues long: UDP-N-acetylmuramoylalanine--D-glutamate ligase (456 aa).

Gly113 to Thr119 serves as a coordination point for ATP.

This sequence belongs to the MurCDEF family.

The protein resides in the cytoplasm. The catalysed reaction is UDP-N-acetyl-alpha-D-muramoyl-L-alanine + D-glutamate + ATP = UDP-N-acetyl-alpha-D-muramoyl-L-alanyl-D-glutamate + ADP + phosphate + H(+). It participates in cell wall biogenesis; peptidoglycan biosynthesis. Its function is as follows. Cell wall formation. Catalyzes the addition of glutamate to the nucleotide precursor UDP-N-acetylmuramoyl-L-alanine (UMA). The chain is UDP-N-acetylmuramoylalanine--D-glutamate ligase from Rippkaea orientalis (strain PCC 8801 / RF-1) (Cyanothece sp. (strain PCC 8801)).